The following is a 636-amino-acid chain: Threonine--tRNA ligase (636 aa).

Residues 1 to 59 form the TGS domain; it reads MPIITLPDGTKKIFEQVVSVEQVAKSMGLVKAALAGEVDGELVSTSFLIKTDANLTIIT. Residues 240 to 531 form a catalytic region; the sequence is DHRKIGKTQD…LIEHYEGAYP (292 aa). 3 residues coordinate Zn(2+): C331, H382, and H508.

It belongs to the class-II aminoacyl-tRNA synthetase family. In terms of assembly, homodimer. Requires Zn(2+) as cofactor.

It is found in the cytoplasm. The enzyme catalyses tRNA(Thr) + L-threonine + ATP = L-threonyl-tRNA(Thr) + AMP + diphosphate + H(+). Catalyzes the attachment of threonine to tRNA(Thr) in a two-step reaction: L-threonine is first activated by ATP to form Thr-AMP and then transferred to the acceptor end of tRNA(Thr). Also edits incorrectly charged L-seryl-tRNA(Thr). The protein is Threonine--tRNA ligase of Vesicomyosocius okutanii subsp. Calyptogena okutanii (strain HA).